A 387-amino-acid chain; its full sequence is MACTIQKAEALDGARLMQILWYDEEESLYPAVWLRDNCPCSDCYLDSAKARKLLAEALDVNIGIKGLTFDRKKVYITWPDEHYSEFQADWLKKRCLSKQARAKLQRELFFPECQYWGSELQLPTLDFEDVLRYDEHAYKWLSTLKKVGIVRLTGASDKPGEVSKLGKRMGFLYLTFYGHTWQVQDKIDANNVAYTTGKLSFHTDYPALHHPPGVQLLHCIKQTVTGGDSEIVDGFNVCQKLKKNNPQAFQILSSTFVDFTDIGVDYCDFSVQSKHKIIELDDKGQVVRINFNNATRDTIFDVPVERVQPFYAALKEFVDLMNSKESKFTFKMNPGDVITFDNWRLLHGRRSYEAGTEISRHLEGAYADWDVVMSRLRILRQRVENGN.

The Zn(2+) site is built by C38, C40, C43, and H82. Residues H202, D204, and H347 each contribute to the Fe cation site. S351 carries the post-translational modification Phosphoserine.

The protein belongs to the gamma-BBH/TMLD family. Requires Fe(2+) as cofactor. It depends on L-ascorbate as a cofactor.

It is found in the cytoplasm. It carries out the reaction 4-(trimethylamino)butanoate + 2-oxoglutarate + O2 = carnitine + succinate + CO2. Its pathway is amine and polyamine biosynthesis; carnitine biosynthesis. In terms of biological role, catalyzes the formation of L-carnitine from gamma-butyrobetaine. In Pongo abelii (Sumatran orangutan), this protein is Gamma-butyrobetaine dioxygenase (BBOX1).